The chain runs to 203 residues: GTP cyclohydrolase-2 (203 aa).

49–53 (RIHSE) lines the GTP pocket. The Zn(2+) site is built by cysteine 54, cysteine 65, and cysteine 67. Residues glutamine 70, 92-94 (EGR), and threonine 114 each bind GTP. The active-site Proton acceptor is aspartate 126. The active-site Nucleophile is arginine 128. Residues threonine 149 and lysine 154 each coordinate GTP.

The protein belongs to the GTP cyclohydrolase II family. The cofactor is Zn(2+).

The catalysed reaction is GTP + 4 H2O = 2,5-diamino-6-hydroxy-4-(5-phosphoribosylamino)-pyrimidine + formate + 2 phosphate + 3 H(+). Its pathway is cofactor biosynthesis; riboflavin biosynthesis; 5-amino-6-(D-ribitylamino)uracil from GTP: step 1/4. Catalyzes the conversion of GTP to 2,5-diamino-6-ribosylamino-4(3H)-pyrimidinone 5'-phosphate (DARP), formate and pyrophosphate. This Shewanella sp. (strain ANA-3) protein is GTP cyclohydrolase-2.